A 90-amino-acid polypeptide reads, in one-letter code: Probable dynein light chain 2, cytoplasmic (90 aa).

The protein belongs to the dynein light chain family.

It localises to the cytoplasm. Its subcellular location is the cytoskeleton. Acts as one of several non-catalytic accessory components of a dynein complex. The chain is Probable dynein light chain 2, cytoplasmic (dlc-2) from Caenorhabditis elegans.